The chain runs to 450 residues: Tubulin alpha-1 chain (450 aa).

Positions 11, 71, 144, 145, 179, 206, and 228 each coordinate GTP. Mg(2+) is bound at residue glutamate 71. Residue glutamate 254 is part of the active site. Threonine 349 carries the post-translational modification Phosphothreonine. Residues 431–450 (DYEEVGGEGAEDDDEEGDEY) are disordered.

It belongs to the tubulin family. In terms of assembly, dimer of alpha and beta chains. A typical microtubule is a hollow water-filled tube with an outer diameter of 25 nm and an inner diameter of 15 nM. Alpha-beta heterodimers associate head-to-tail to form protofilaments running lengthwise along the microtubule wall with the beta-tubulin subunit facing the microtubule plus end conferring a structural polarity. Microtubules usually have 13 protofilaments but different protofilament numbers can be found in some organisms and specialized cells. Mg(2+) serves as cofactor. Undergoes a tyrosination/detyrosination cycle, the cyclic removal and re-addition of a C-terminal tyrosine residue by the enzymes tubulin tyrosine carboxypeptidase (TTCP) and tubulin tyrosine ligase (TTL), respectively.

The protein localises to the cytoplasm. The protein resides in the cytoskeleton. The enzyme catalyses GTP + H2O = GDP + phosphate + H(+). Functionally, tubulin is the major constituent of microtubules, a cylinder consisting of laterally associated linear protofilaments composed of alpha- and beta-tubulin heterodimers. Microtubules grow by the addition of GTP-tubulin dimers to the microtubule end, where a stabilizing cap forms. Below the cap, tubulin dimers are in GDP-bound state, owing to GTPase activity of alpha-tubulin. The chain is Tubulin alpha-1 chain (TUBA1) from Arabidopsis thaliana (Mouse-ear cress).